The chain runs to 978 residues: Rab3 GTPase-activating protein catalytic subunit (978 aa).

3 disordered regions span residues E533–D554, H586–Q621, and E908–L936. The span at L540–D554 shows a compositional bias: polar residues. Composition is skewed to basic and acidic residues over residues H586–L619 and E909–Q922.

Belongs to the Rab3-GAP catalytic subunit family. The Rab3 GTPase-activating complex is a heterodimer composed of rab3gap1 and rab3gap2. The Rab3 GTPase-activating complex interacts with DMXL2. Interacts with LMAN1.

The protein localises to the cytoplasm. Its subcellular location is the endoplasmic reticulum. The protein resides in the golgi apparatus. It localises to the cis-Golgi network. Catalytic subunit of the Rab3 GTPase-activating (Rab3GAP) complex composed of rab3gap1 and rab3gap2, which has GTPase-activating protein (GAP) activity towards various Rab3 subfamily members (RAB3A, RAB3B, RAB3C and RAB3D), RAB5A and RAB43, and guanine nucleotide exchange factor (GEF) activity towards RAB18. As part of the Rab3GAP complex, acts as a GAP for Rab3 proteins by converting active RAB3-GTP to the inactive form RAB3-GDP. Rab3 proteins are involved in regulated exocytosis of neurotransmitters and hormones. The Rab3GAP complex, acts as a GEF for RAB18 by promoting the conversion of inactive RAB18-GDP to the active form RAB18-GTP. Recruits and stabilizes RAB18 at the cis-Golgi membrane where RAB18 is most likely activated. Also involved in RAB18 recruitment at the endoplasmic reticulum (ER) membrane where it maintains proper ER structure. Required for normal eye and brain development. May participate in neurodevelopmental processes such as proliferation, migration and differentiation before synapse formation, and non-synaptic vesicular release of neurotransmitters. The sequence is that of Rab3 GTPase-activating protein catalytic subunit (rab3gap1) from Xenopus laevis (African clawed frog).